The sequence spans 542 residues: CTP synthase (542 aa).

The amidoligase domain stretch occupies residues 1–265; the sequence is MTKYIFVTGG…LKPISKELSL (265 aa). S13 lines the CTP pocket. Residue S13 coordinates UTP. ATP-binding positions include 14 to 19 and D71; that span reads SLGKGI. Residues D71 and E139 each contribute to the Mg(2+) site. CTP contacts are provided by residues 146-148, 186-191, and K222; these read DIE and KSKPTQ. UTP-binding positions include 186–191 and K222; that span reads KSKPTQ. The Glutamine amidotransferase type-1 domain occupies 290-541; it reads VLGFVGKYLE…VEATLAISQE (252 aa). G352 lines the L-glutamine pocket. The active-site Nucleophile; for glutamine hydrolysis is the C379. Residues 380–383, E403, and R471 contribute to the L-glutamine site; that span reads LGMQ. Active-site residues include H514 and E516.

This sequence belongs to the CTP synthase family. Homotetramer.

The enzyme catalyses UTP + L-glutamine + ATP + H2O = CTP + L-glutamate + ADP + phosphate + 2 H(+). It carries out the reaction L-glutamine + H2O = L-glutamate + NH4(+). The catalysed reaction is UTP + NH4(+) + ATP = CTP + ADP + phosphate + 2 H(+). It functions in the pathway pyrimidine metabolism; CTP biosynthesis via de novo pathway; CTP from UDP: step 2/2. Its activity is regulated as follows. Allosterically activated by GTP, when glutamine is the substrate; GTP has no effect on the reaction when ammonia is the substrate. The allosteric effector GTP functions by stabilizing the protein conformation that binds the tetrahedral intermediate(s) formed during glutamine hydrolysis. Inhibited by the product CTP, via allosteric rather than competitive inhibition. Functionally, catalyzes the ATP-dependent amination of UTP to CTP with either L-glutamine or ammonia as the source of nitrogen. Regulates intracellular CTP levels through interactions with the four ribonucleotide triphosphates. This chain is CTP synthase, found in Sulfurimonas denitrificans (strain ATCC 33889 / DSM 1251) (Thiomicrospira denitrificans (strain ATCC 33889 / DSM 1251)).